A 415-amino-acid chain; its full sequence is 3-isopropylmalate dehydratase large subunit (415 aa).

[4Fe-4S] cluster-binding residues include Cys295, Cys353, and Cys356.

This sequence belongs to the aconitase/IPM isomerase family. LeuC type 2 subfamily. As to quaternary structure, heterodimer of LeuC and LeuD. [4Fe-4S] cluster serves as cofactor.

It carries out the reaction (2R,3S)-3-isopropylmalate = (2S)-2-isopropylmalate. It participates in amino-acid biosynthesis; L-leucine biosynthesis; L-leucine from 3-methyl-2-oxobutanoate: step 2/4. Its function is as follows. Catalyzes the isomerization between 2-isopropylmalate and 3-isopropylmalate, via the formation of 2-isopropylmaleate. This is 3-isopropylmalate dehydratase large subunit from Pyrobaculum arsenaticum (strain DSM 13514 / JCM 11321 / PZ6).